We begin with the raw amino-acid sequence, 142 residues long: HTH-type transcriptional regulator MntR (142 aa).

The region spanning 1–63 (MPTPSMEDYI…YEKYRGLILT (63 aa)) is the HTH dtxR-type domain. Residues Asp8, Glu11, His77, Glu99, Glu102, and His103 each contribute to the Mn(2+) site.

This sequence belongs to the DtxR/MntR family. Homodimer.

The protein resides in the cytoplasm. Its activity is regulated as follows. DNA binding is strongly activated by Mn(2+). Central regulator of manganese homeostasis. The chain is HTH-type transcriptional regulator MntR from Listeria monocytogenes serotype 4b (strain CLIP80459).